Reading from the N-terminus, the 350-residue chain is Dihydroorotase (350 aa).

Zn(2+)-binding residues include H17 and H19. Substrate contacts are provided by residues 19-21 and N45; that span reads HLR. 3 residues coordinate Zn(2+): K103, H140, and H178. K103 is modified (N6-carboxylysine). A substrate-binding site is contributed by H140. L223 is a binding site for substrate. D251 is a binding site for Zn(2+). Residue D251 is part of the active site. Substrate is bound by residues H255 and A267.

The protein belongs to the metallo-dependent hydrolases superfamily. DHOase family. Class II DHOase subfamily. As to quaternary structure, homodimer. Zn(2+) is required as a cofactor.

The enzyme catalyses (S)-dihydroorotate + H2O = N-carbamoyl-L-aspartate + H(+). It participates in pyrimidine metabolism; UMP biosynthesis via de novo pathway; (S)-dihydroorotate from bicarbonate: step 3/3. In terms of biological role, catalyzes the reversible cyclization of carbamoyl aspartate to dihydroorotate. This Erwinia tasmaniensis (strain DSM 17950 / CFBP 7177 / CIP 109463 / NCPPB 4357 / Et1/99) protein is Dihydroorotase.